Consider the following 581-residue polypeptide: Pyridine nucleotide-disulfide oxidoreductase domain-containing protein 2 (581 aa).

38–71 (VVIGAGHNGLVAAAYLQRLGVNTAVFERRHVIGG) serves as a coordination point for FAD.

It belongs to the carotenoid/retinoid oxidoreductase family. Interacts with COX5B; this interaction may contribute to localize PYROXD2 to the inner face of the inner mitochondrial membrane.

Its subcellular location is the mitochondrion matrix. Probable oxidoreductase that may play a role as regulator of mitochondrial function. The sequence is that of Pyridine nucleotide-disulfide oxidoreductase domain-containing protein 2 from Homo sapiens (Human).